Reading from the N-terminus, the 1062-residue chain is NACHT, LRR and PYD domains-containing protein 2 (1062 aa).

The region spanning Met-1 to Glu-94 is the Pyrin domain. The region spanning Tyr-207–Asp-526 is the NACHT domain. Gly-213 to Thr-220 serves as a coordination point for ATP. Ser-671 carries the post-translational modification Phosphoserine. LRR repeat units lie at residues Ser-812–Tyr-832, Phe-841–Ala-861, Glu-869–Cys-889, Lys-898–Thr-918, Ser-926–Cys-946, Asn-955–Ser-976, Ser-983–Phe-1003, and Ser-1010–Glu-1033.

This sequence belongs to the NLRP family. In terms of assembly, interacts with CHUK. Interacts with IKBKB. Interacts with IKBKG. Interacts with MEFV. Interacts with PYCARD. Interacts (via pyrin domain) with PYDC2. Interacts with CARD8. In terms of tissue distribution, expressed at high levels in lung, placenta and thymus and at lower levels in ovary, intestine and brain. Highly abundant in oocytes and early embryos, however poorly expressed in somatic tissues such as brain, kidney, liver and spinal cord.

The protein resides in the cytoplasm. Its function is as follows. Suppresses TNF- and CD40-induced NFKB1 activity at the level of the IKK complex, by inhibiting NFKBIA degradation induced by TNF. When associated with PYCARD, activates CASP1, leading to the secretion of mature pro-inflammatory cytokine IL1B. May be a component of the inflammasome, a protein complex which also includes PYCARD, CARD8 and CASP1 and whose function would be the activation of pro-inflammatory caspases. This is NACHT, LRR and PYD domains-containing protein 2 (NLRP2) from Homo sapiens (Human).